The sequence spans 410 residues: Multifunctional CCA protein (410 aa).

2 residues coordinate ATP: Gly-8 and Arg-11. 2 residues coordinate CTP: Gly-8 and Arg-11. Mg(2+) contacts are provided by Asp-21 and Asp-23. Arg-91, Arg-137, and Arg-140 together coordinate ATP. CTP is bound by residues Arg-91, Arg-137, and Arg-140. Residues 225 to 326 (SGIHTLMTLQ…LNVLKKTDAF (102 aa)) form the HD domain.

It belongs to the tRNA nucleotidyltransferase/poly(A) polymerase family. Bacterial CCA-adding enzyme type 1 subfamily. Monomer. Can also form homodimers and oligomers. Requires Mg(2+) as cofactor. It depends on Ni(2+) as a cofactor.

It carries out the reaction a tRNA precursor + 2 CTP + ATP = a tRNA with a 3' CCA end + 3 diphosphate. The catalysed reaction is a tRNA with a 3' CCA end + 2 CTP + ATP = a tRNA with a 3' CCACCA end + 3 diphosphate. In terms of biological role, catalyzes the addition and repair of the essential 3'-terminal CCA sequence in tRNAs without using a nucleic acid template. Adds these three nucleotides in the order of C, C, and A to the tRNA nucleotide-73, using CTP and ATP as substrates and producing inorganic pyrophosphate. tRNA 3'-terminal CCA addition is required both for tRNA processing and repair. Also involved in tRNA surveillance by mediating tandem CCA addition to generate a CCACCA at the 3' terminus of unstable tRNAs. While stable tRNAs receive only 3'-terminal CCA, unstable tRNAs are marked with CCACCA and rapidly degraded. This chain is Multifunctional CCA protein, found in Neisseria gonorrhoeae (strain NCCP11945).